Consider the following 33-residue polypeptide: Cytochrome b6-f complex subunit 8 (33 aa).

The helical transmembrane segment at leucine 2–valine 22 threads the bilayer.

It belongs to the PetN family. The 4 large subunits of the cytochrome b6-f complex are cytochrome b6, subunit IV (17 kDa polypeptide, PetD), cytochrome f and the Rieske protein, while the 4 small subunits are PetG, PetL, PetM and PetN. The complex functions as a dimer.

The protein resides in the cellular thylakoid membrane. Its function is as follows. Component of the cytochrome b6-f complex, which mediates electron transfer between photosystem II (PSII) and photosystem I (PSI), cyclic electron flow around PSI, and state transitions. In Parasynechococcus marenigrum (strain WH8102), this protein is Cytochrome b6-f complex subunit 8.